The following is a 231-amino-acid chain: PIAGSMVLAAILLKLGGYGIIRMMQVLPTTKTDMFLPFIVLALWGAVLANLTCLQQTDLKSLIAYSSISHMGLVVATIIIQTPWGLSGAMALMIAHGFTSSALFCLANTTYERTHTRILILTRGFHNILPMATTWWLLANLMNIAIPPTMNFTGELLISSSLFNWCPTTIILLGLSMLITACYSLHMLLSTQMGPTPLNSQTEPTHSREHLLMVLHLAPLMMISMKPELII.

6 helical membrane passes run 1–21, 34–54, 63–85, 89–111, 128–148, and 169–189; these read PIAG…YGII, MFLP…LTCL, IAYS…TPWG, AMAL…NTTY, ILPM…AIPP, and TIIL…HMLL.

It belongs to the complex I subunit 4 family.

The protein localises to the mitochondrion membrane. The catalysed reaction is a ubiquinone + NADH + 5 H(+)(in) = a ubiquinol + NAD(+) + 4 H(+)(out). In terms of biological role, core subunit of the mitochondrial membrane respiratory chain NADH dehydrogenase (Complex I) that is believed to belong to the minimal assembly required for catalysis. Complex I functions in the transfer of electrons from NADH to the respiratory chain. The immediate electron acceptor for the enzyme is believed to be ubiquinone. The protein is NADH-ubiquinone oxidoreductase chain 4 (MT-ND4) of Bothrops bilineatus (Green jararaca).